Here is a 415-residue protein sequence, read N- to C-terminus: Granaticin polyketide putative beta-ketoacyl synthase 2 (415 aa).

One can recognise a Ketosynthase family 3 (KS3) domain in the interval 6-406 (RRRAVVTGLS…GFNSAVVVTL (401 aa)).

The protein belongs to the thiolase-like superfamily. Beta-ketoacyl-ACP synthases family.

It functions in the pathway antibiotic biosynthesis; granaticin biosynthesis. The protein is Granaticin polyketide putative beta-ketoacyl synthase 2 (gra-orf2) of Streptomyces violaceoruber.